The following is a 338-amino-acid chain: S-adenosylmethionine:tRNA ribosyltransferase-isomerase (338 aa).

Belongs to the QueA family. In terms of assembly, monomer.

The protein resides in the cytoplasm. The enzyme catalyses 7-aminomethyl-7-carbaguanosine(34) in tRNA + S-adenosyl-L-methionine = epoxyqueuosine(34) in tRNA + adenine + L-methionine + 2 H(+). The protein operates within tRNA modification; tRNA-queuosine biosynthesis. In terms of biological role, transfers and isomerizes the ribose moiety from AdoMet to the 7-aminomethyl group of 7-deazaguanine (preQ1-tRNA) to give epoxyqueuosine (oQ-tRNA). The polypeptide is S-adenosylmethionine:tRNA ribosyltransferase-isomerase (Francisella tularensis subsp. novicida (strain U112)).